The chain runs to 1384 residues: DNA-directed RNA polymerase subunit beta (1384 aa).

Belongs to the RNA polymerase beta chain family. In terms of assembly, the RNAP catalytic core consists of 2 alpha, 1 beta, 1 beta' and 1 omega subunit. When a sigma factor is associated with the core the holoenzyme is formed, which can initiate transcription.

The enzyme catalyses RNA(n) + a ribonucleoside 5'-triphosphate = RNA(n+1) + diphosphate. DNA-dependent RNA polymerase catalyzes the transcription of DNA into RNA using the four ribonucleoside triphosphates as substrates. In Stenotrophomonas maltophilia (strain R551-3), this protein is DNA-directed RNA polymerase subunit beta.